The primary structure comprises 478 residues: Noelin-3 (478 aa).

The signal sequence occupies residues Met1–Ser23. N-linked (GlcNAc...) asparagine glycans are attached at residues Asn33, Asn95, Asn179, Asn299, and Asn465. Residues Cys77–Leu217 are a coiled coil. The region spanning Thr218–His470 is the Olfactomedin-like domain. Cys219 and Cys401 form a disulfide bridge.

In terms of assembly, peripherally associated with AMPAR complex. AMPAR complex consists of an inner core made of 4 pore-forming GluA/GRIA proteins (GRIA1, GRIA2, GRIA3 and GRIA4) and 4 major auxiliary subunits arranged in a twofold symmetry. One of the two pairs of distinct binding sites is occupied either by CNIH2, CNIH3 or CACNG2, CACNG3. The other harbors CACNG2, CACNG3, CACNG4, CACNG8 or GSG1L. This inner core of AMPAR complex is complemented by outer core constituents binding directly to the GluA/GRIA proteins at sites distinct from the interaction sites of the inner core constituents. Outer core constituents include at least PRRT1, PRRT2, CKAMP44/SHISA9, FRRS1L and NRN1. The proteins of the inner and outer core serve as a platform for other, more peripherally associated AMPAR constituents, including OLFM3. Alone or in combination, these auxiliary subunits control the gating and pharmacology of the AMPAR complex and profoundly impact their biogenesis and protein processing. Homodimer. Interacts with MYOC. Interacts with OLFM2. In terms of tissue distribution, in the eye, expressed in trabecular meshwork and neural retina; in non-ocular tissues, expressed in brain and lung.

Its subcellular location is the secreted. It localises to the synapse. The sequence is that of Noelin-3 (OLFM3) from Homo sapiens (Human).